The primary structure comprises 660 residues: uncharacterized protein (660 aa).

Residues 1–660 (MGTPCQSARG…RNPGCPRTWR (660 aa)) are disordered. The span at 67–80 (RPGGGNRVGAGRGR) shows a compositional bias: gly residues. The segment covering 104 to 116 (SNPTGGCSDPQRS) has biased composition (polar residues). 4 consecutive repeat copies span residues 149 to 273 (SARN…GCPR), 274 to 398 (SARN…GCPR), 399 to 523 (SARN…GCPR), and 524 to 648 (SARN…GCPR). A 4 X 125 AA tandem repeats region spans residues 149-648 (SARNPGCPRT…THRRPPGCPR (500 aa)). 4 stretches are compositionally biased toward low complexity: residues 177-196 (RPSG…GTPA), 302-321 (RPSG…GTPA), 427-446 (RPSG…GTPA), and 552-571 (RPSG…GTPA).

This is an uncharacterized protein from Homo sapiens (Human).